We begin with the raw amino-acid sequence, 445 residues long: Glucose-6-phosphate isomerase (445 aa).

The active-site Proton donor is E284. Residues H305 and K419 contribute to the active site.

It belongs to the GPI family.

It localises to the cytoplasm. It catalyses the reaction alpha-D-glucose 6-phosphate = beta-D-fructose 6-phosphate. It functions in the pathway carbohydrate biosynthesis; gluconeogenesis. It participates in carbohydrate degradation; glycolysis; D-glyceraldehyde 3-phosphate and glycerone phosphate from D-glucose: step 2/4. In terms of biological role, catalyzes the reversible isomerization of glucose-6-phosphate to fructose-6-phosphate. The polypeptide is Glucose-6-phosphate isomerase (Leptospira interrogans serogroup Icterohaemorrhagiae serovar Lai (strain 56601)).